We begin with the raw amino-acid sequence, 484 residues long: Protein DETOXIFICATION 33 (484 aa).

The span at Met1–Pro16 shows a compositional bias: basic and acidic residues. The tract at residues Met1–Lys22 is disordered. Transmembrane regions (helical) follow at residues Leu39 to Leu59, Val81 to Cys101, Val122 to Leu142, Ala155 to Ile175, Trp190 to Phe210, Ala218 to Ile238, Ala267 to Leu287, Val294 to Phe314, Val338 to Ala358, Ile380 to Val400, Leu409 to Leu429, and Gly439 to Ile459.

The protein belongs to the multi antimicrobial extrusion (MATE) (TC 2.A.66.1) family.

Its subcellular location is the membrane. This is Protein DETOXIFICATION 33 from Arabidopsis thaliana (Mouse-ear cress).